The sequence spans 421 residues: 3-isopropylmalate dehydratase large subunit (421 aa).

3 residues coordinate [4Fe-4S] cluster: C302, C362, and C365.

The protein belongs to the aconitase/IPM isomerase family. LeuC type 2 subfamily. As to quaternary structure, heterodimer of LeuC and LeuD. The cofactor is [4Fe-4S] cluster.

The enzyme catalyses (2R,3S)-3-isopropylmalate = (2S)-2-isopropylmalate. It functions in the pathway amino-acid biosynthesis; L-leucine biosynthesis; L-leucine from 3-methyl-2-oxobutanoate: step 2/4. In terms of biological role, catalyzes the isomerization between 2-isopropylmalate and 3-isopropylmalate, via the formation of 2-isopropylmaleate. This chain is 3-isopropylmalate dehydratase large subunit, found in Nitratiruptor sp. (strain SB155-2).